The chain runs to 339 residues: Ketol-acid reductoisomerase (NADP(+)) (339 aa).

The KARI N-terminal Rossmann domain occupies 1 to 182 (MRVYYDRDAD…GGGRSGIIET (182 aa)). NADP(+)-binding positions include 24–27 (YGSQ), Arg48, Ser51, Thr53, and 83–86 (DEHQ). Residue His108 is part of the active site. Gly134 is a binding site for NADP(+). One can recognise a KARI C-terminal knotted domain in the interval 183 to 328 (NFREECETDL…ARLRGMMPWI (146 aa)). Mg(2+) contacts are provided by Asp191, Glu195, Glu227, and Glu231. Ser252 provides a ligand contact to substrate.

It belongs to the ketol-acid reductoisomerase family. It depends on Mg(2+) as a cofactor.

The catalysed reaction is (2R)-2,3-dihydroxy-3-methylbutanoate + NADP(+) = (2S)-2-acetolactate + NADPH + H(+). It carries out the reaction (2R,3R)-2,3-dihydroxy-3-methylpentanoate + NADP(+) = (S)-2-ethyl-2-hydroxy-3-oxobutanoate + NADPH + H(+). Its pathway is amino-acid biosynthesis; L-isoleucine biosynthesis; L-isoleucine from 2-oxobutanoate: step 2/4. It functions in the pathway amino-acid biosynthesis; L-valine biosynthesis; L-valine from pyruvate: step 2/4. Involved in the biosynthesis of branched-chain amino acids (BCAA). Catalyzes an alkyl-migration followed by a ketol-acid reduction of (S)-2-acetolactate (S2AL) to yield (R)-2,3-dihydroxy-isovalerate. In the isomerase reaction, S2AL is rearranged via a Mg-dependent methyl migration to produce 3-hydroxy-3-methyl-2-ketobutyrate (HMKB). In the reductase reaction, this 2-ketoacid undergoes a metal-dependent reduction by NADPH to yield (R)-2,3-dihydroxy-isovalerate. This is Ketol-acid reductoisomerase (NADP(+)) from Caulobacter vibrioides (strain ATCC 19089 / CIP 103742 / CB 15) (Caulobacter crescentus).